The primary structure comprises 199 residues: uncharacterized protein (199 aa).

This is an uncharacterized protein from Borreliella burgdorferi (strain ATCC 35210 / DSM 4680 / CIP 102532 / B31) (Borrelia burgdorferi).